The chain runs to 356 residues: 5-formaminoimidazole-4-carboxamide-1-(beta)-D-ribofuranosyl 5'-monophosphate synthetase (356 aa).

Residues histidine 27 and serine 94 each contribute to the 5-amino-1-(5-phospho-beta-D-ribosyl)imidazole-4-carboxamide site. The region spanning threonine 101–serine 333 is the ATP-grasp domain. Residues proline 145–tyrosine 196 and glutamate 226 each bind ATP. Asparagine 255 contributes to the 5-amino-1-(5-phospho-beta-D-ribosyl)imidazole-4-carboxamide binding site. The Mg(2+) site is built by glutamate 293 and glutamate 306.

Belongs to the phosphohexose mutase family. It depends on Mg(2+) as a cofactor. Mn(2+) serves as cofactor.

It carries out the reaction 5-amino-1-(5-phospho-beta-D-ribosyl)imidazole-4-carboxamide + formate + ATP = 5-formamido-1-(5-phospho-D-ribosyl)imidazole-4-carboxamide + ADP + phosphate. It participates in purine metabolism; IMP biosynthesis via de novo pathway; 5-formamido-1-(5-phospho-D-ribosyl)imidazole-4-carboxamide from 5-amino-1-(5-phospho-D-ribosyl)imidazole-4-carboxamide (formate route): step 1/1. Functionally, catalyzes the ATP- and formate-dependent formylation of 5-aminoimidazole-4-carboxamide-1-beta-d-ribofuranosyl 5'-monophosphate (AICAR) to 5-formaminoimidazole-4-carboxamide-1-beta-d-ribofuranosyl 5'-monophosphate (FAICAR) in the absence of folates. In Methanosarcina acetivorans (strain ATCC 35395 / DSM 2834 / JCM 12185 / C2A), this protein is 5-formaminoimidazole-4-carboxamide-1-(beta)-D-ribofuranosyl 5'-monophosphate synthetase.